We begin with the raw amino-acid sequence, 361 residues long: Serine/threonine-protein kinase SAPK9 (361 aa).

Residues 22 to 278 (YELVKEIGSG…MPEIKNHPWF (257 aa)) form the Protein kinase domain. ATP is bound by residues 28–36 (IGSGNFGVA) and Lys51. Asp141 acts as the Proton acceptor in catalysis.

It belongs to the protein kinase superfamily. Ser/Thr protein kinase family. Interacts with BZIP46. Post-translationally, may be phosphorylated. Expressed in leaf sheaths and roots. Expressed in shoots of young seedlings.

It localises to the cytoplasm. The protein localises to the nucleus. The enzyme catalyses L-seryl-[protein] + ATP = O-phospho-L-seryl-[protein] + ADP + H(+). It catalyses the reaction L-threonyl-[protein] + ATP = O-phospho-L-threonyl-[protein] + ADP + H(+). Its activity is regulated as follows. Activated by hyperosmotic stress and abscisic acid (ABA). In terms of biological role, may play a role in signal transduction of hyperosmotic response. Can phosphorylate BZIP46 in vitro. The chain is Serine/threonine-protein kinase SAPK9 (SAPK9) from Oryza sativa subsp. japonica (Rice).